The sequence spans 889 residues: DNA gyrase subunit A (889 aa).

The 467-residue stretch at 35 to 501 (LPDVRDGLKP…GFEDLEDEDL (467 aa)) folds into the Topo IIA-type catalytic domain. Tyr123 (O-(5'-phospho-DNA)-tyrosine intermediate) is an active-site residue. Positions 528-534 (QNRGGRG) match the GyrA-box motif. Residues 810-889 (VKEDAEDETN…IQQSSDEDEE (80 aa)) are disordered. Acidic residues predominate over residues 813–823 (DAEDETNEDEQ). Basic and acidic residues predominate over residues 863–875 (DGRIEVRQDFMDR). The span at 876–889 (VEEDIQQSSDEDEE) shows a compositional bias: acidic residues.

Belongs to the type II topoisomerase GyrA/ParC subunit family. As to quaternary structure, heterotetramer, composed of two GyrA and two GyrB chains. In the heterotetramer, GyrA contains the active site tyrosine that forms a transient covalent intermediate with DNA, while GyrB binds cofactors and catalyzes ATP hydrolysis.

It localises to the cytoplasm. It carries out the reaction ATP-dependent breakage, passage and rejoining of double-stranded DNA.. Functionally, a type II topoisomerase that negatively supercoils closed circular double-stranded (ds) DNA in an ATP-dependent manner to modulate DNA topology and maintain chromosomes in an underwound state. Negative supercoiling favors strand separation, and DNA replication, transcription, recombination and repair, all of which involve strand separation. Also able to catalyze the interconversion of other topological isomers of dsDNA rings, including catenanes and knotted rings. Type II topoisomerases break and join 2 DNA strands simultaneously in an ATP-dependent manner. The protein is DNA gyrase subunit A of Staphylococcus aureus (strain N315).